We begin with the raw amino-acid sequence, 673 residues long: Putative transcription factor tau subunit sfc9 (673 aa).

In terms of assembly, may be a component of the TFIIIC complex.

It is found in the nucleus. This is Putative transcription factor tau subunit sfc9 from Schizosaccharomyces pombe (strain 972 / ATCC 24843) (Fission yeast).